We begin with the raw amino-acid sequence, 185 residues long: Ribosome-recycling factor (185 aa).

This sequence belongs to the RRF family.

Its subcellular location is the cytoplasm. In terms of biological role, responsible for the release of ribosomes from messenger RNA at the termination of protein biosynthesis. May increase the efficiency of translation by recycling ribosomes from one round of translation to another. The polypeptide is Ribosome-recycling factor (Clavibacter sepedonicus (Clavibacter michiganensis subsp. sepedonicus)).